We begin with the raw amino-acid sequence, 62 residues long: ATP synthase subunit K, mitochondrial (62 aa).

Residues 14 to 30 (HHLAIATIGTVVALVAP) traverse the membrane as a helical segment.

F-type ATP synthases have 2 components, the catalytic core F(1) and the membrane-embedded component F(0), linked together by a central stalk and a peripheral stalk. The central stalk, also called rotor shaft, is often seen as part of F(1). The peripheral stalk is seen as part of F(0). F(0) contains the membrane channel next to the rotor. F-type ATP synthases form dimers but each monomer functions independently in ATP generation. The dimer consists of 18 different polypeptides: ATP1 (subunit alpha, part of F(1), 3 molecules per monomer), ATP2 (subunit beta, part of F(1), 3 molecules per monomer), ATP3 (subunit gamma, part of the central stalk), ATP4 (subunit b, part of the peripheral stalk), ATP5/OSCP (subunit 5/OSCP, part of the peripheral stalk), ATP6 (subunit a, part of the peripheral stalk), ATP7 (subunit d, part of the peripheral stalk), ATP8 (subunit 8, part of the peripheral stalk), OLI1 (subunit c, part of the rotor, 10 molecules per monomer), ATP14 (subunit h, part of the peripheral stalk), ATP15 (subunit epsilon, part of the central stalk), ATP16 (subunit delta, part of the central stalk), ATP17 (subunit f, part of the peripheral stalk), ATP18 (subunit i/j, part of the peripheral stalk). Dimer-specific subunits are ATP19 (subunit k, at interface between monomers), ATP20 (subunit g, at interface between monomers), TIM11 (subunit e, at interface between monomers). Also contains subunit L.

It is found in the mitochondrion inner membrane. Functionally, mitochondrial membrane ATP synthase (F(1)F(0) ATP synthase or Complex V) produces ATP from ADP in the presence of a proton gradient across the membrane which is generated by electron transport complexes of the respiratory chain. F-type ATP synthases consist of two structural domains, F(1) - containing the extramembraneous catalytic core, and F(0) - containing the membrane proton channel, linked together by a central stalk and a peripheral stalk. During catalysis, ATP synthesis in the catalytic domain of F(1) is coupled via a rotary mechanism of the central stalk subunits to proton translocation. Part of the complex F(0) domain. Minor subunit located with subunit a/ATP6 in the membrane. The K chain binds the dimeric form by interacting with the G and E chains. The sequence is that of ATP synthase subunit K, mitochondrial from Pichia angusta (Yeast).